A 462-amino-acid polypeptide reads, in one-letter code: MSSRSPKDLIKSKWGSRPSSSKSDTALEKFKGEIAAFKTSLDEITSGKGKMAEKGRSRLLEKIQVLEAEREKNVYYLLEKDKEIQRLKDHLRSRYSSSSLFEQLEEKTKECEKKQQLLESLSKETDVLKNQLSATTKRLSELESKASTLHLSQSMPANCFNSSMNSIHEKEMQLKDALEKNQQWLVYDQQREAYVKGLLAKIFELEKRTETAAASLTQQMKKIESEGYLQVEKQKYDHLLENAKKDLEVERQAVTQLRLELDEFRRKYEEARKEVEDLNQLLSSQRKADIQHLEEDKQKTERIQKLREESSIFKGKLEEERKRSEELLSQVRILYDSLLKHQEEQARVALLEQQMQACTLDFENEKLDRQNMQHQLYVILKELRKAKSQITQLESLKQLHGFTITEQPFPLQREPESRVKATSPKSPSAALNDSLVECPKCSVQYPATEHRDLLVHVEYCMK.

The span at 1–11 (MSSRSPKDLIK) shows a compositional bias: basic and acidic residues. The segment at 1–26 (MSSRSPKDLIKSKWGSRPSSSKSDTA) is disordered. Over residues 12–23 (SKWGSRPSSSKS) the composition is skewed to low complexity. The stretch at 50–400 (KMAEKGRSRL…TQLESLKQLH (351 aa)) forms a coiled coil. 2 positions are modified to phosphoserine: Ser96 and Ser99. Residues 157–235 (ANCFNSSMNS…EGYLQVEKQK (79 aa)) form an interaction with TSG101 region. Positions 160–214 (FNSSMNSIHEKEMQLKDALEKNQQWLVYDQQREAYVKGLLAKIFELEKRTETAAA) are interaction with PDCD6IP. The required for localization to the interphase centrosome and to the midbody during cytokinesis stretch occupies residues 354 to 462 (QMQACTLDFE…LLVHVEYCMK (109 aa)). A disordered region spans residues 410 to 430 (PLQREPESRVKATSPKSPSAA). Ser423, Ser426, and Ser428 each carry phosphoserine. Ser434 bears the Phosphoserine; by PLK1 mark.

In terms of assembly, homodimer. Interacts (phosphorylated on Ser-423 and Ser-426) with PLK1; the interaction is indirect via the MTMR3:MTMR4 heterooligomer, occurs during early mitosis, regulates the phosphorylation of CEP55 by PLK1 and its recruitment to the midbody where it can mediate cell abscission. Interacts with AKAP9/CG-NAP; the interaction occurs in interphase and is lost upon mitotic entry. Interacts with PCNT/Kendrin; the interaction occurs in interphase and is lost upon mitotic entry. Directly interacts with PDCD6IP; this interaction is required for PDCD6IP targeting to the midbody; CEP55 binds PDCD6IP in a 2:1 stoichiometry; PDCD6IP competes with TSG101 for the same binding site. Interacts with TSG101; TSG101 competes with PDCD6IP for the same binding site; interaction is required for cytokinesis. Interacts with MVB12A, VPS37B, VPS37C and VPS28. In terms of processing, there is a hierachy of phosphorylation, where both Ser-423 and Ser-426 are phosphorylated at the onset of mitosis, prior to Ser-434. Phosphorylation at Ser-423 and Ser-426 is required for dissociation from the centrosome at the G2/M boundary. Phosphorylation at the 3 sites, Ser-423, Ser-426 and Ser-434, is required for protein function at the final stages of cell division to complete cytokinesis successfully.

It localises to the cytoplasm. The protein localises to the cytoskeleton. It is found in the microtubule organizing center. The protein resides in the centrosome. Its subcellular location is the centriole. It localises to the cleavage furrow. The protein localises to the midbody. It is found in the midbody ring. In terms of biological role, plays a role in mitotic exit and cytokinesis. Recruits PDCD6IP and TSG101 to midbody during cytokinesis. Required for successful completion of cytokinesis. Not required for microtubule nucleation. Plays a role in the development of the brain and kidney. The protein is Centrosomal protein of 55 kDa of Mus musculus (Mouse).